Reading from the N-terminus, the 123-residue chain is Large ribosomal subunit protein uL14 (123 aa).

It belongs to the universal ribosomal protein uL14 family. As to quaternary structure, part of the 50S ribosomal subunit. Forms a cluster with proteins L3 and L19. In the 70S ribosome, L14 and L19 interact and together make contacts with the 16S rRNA in bridges B5 and B8.

In terms of biological role, binds to 23S rRNA. Forms part of two intersubunit bridges in the 70S ribosome. The chain is Large ribosomal subunit protein uL14 from Escherichia coli O6:K15:H31 (strain 536 / UPEC).